We begin with the raw amino-acid sequence, 211 residues long: Pyridoxine/pyridoxamine 5'-phosphate oxidase (211 aa).

Residues 7-10 (RREY) and K65 contribute to the substrate site. FMN-binding positions include 60–65 (RTVLLK), 75–76 (YT), R81, K82, and Q104. Y122, R126, and S130 together coordinate substrate. FMN is bound by residues 139–140 (QS) and W184. Residue 190–192 (RLH) participates in substrate binding. R194 is a binding site for FMN.

It belongs to the pyridoxamine 5'-phosphate oxidase family. Homodimer. FMN serves as cofactor.

The catalysed reaction is pyridoxamine 5'-phosphate + O2 + H2O = pyridoxal 5'-phosphate + H2O2 + NH4(+). It carries out the reaction pyridoxine 5'-phosphate + O2 = pyridoxal 5'-phosphate + H2O2. It participates in cofactor metabolism; pyridoxal 5'-phosphate salvage; pyridoxal 5'-phosphate from pyridoxamine 5'-phosphate: step 1/1. The protein operates within cofactor metabolism; pyridoxal 5'-phosphate salvage; pyridoxal 5'-phosphate from pyridoxine 5'-phosphate: step 1/1. Its function is as follows. Catalyzes the oxidation of either pyridoxine 5'-phosphate (PNP) or pyridoxamine 5'-phosphate (PMP) into pyridoxal 5'-phosphate (PLP). This chain is Pyridoxine/pyridoxamine 5'-phosphate oxidase, found in Aeromonas hydrophila subsp. hydrophila (strain ATCC 7966 / DSM 30187 / BCRC 13018 / CCUG 14551 / JCM 1027 / KCTC 2358 / NCIMB 9240 / NCTC 8049).